The primary structure comprises 201 residues: Dephospho-CoA kinase (201 aa).

The 199-residue stretch at 3 to 201 folds into the DPCK domain; sequence VIGLTGGIAS…WKERIEKNPR (199 aa). 11 to 16 is a binding site for ATP; that stretch reads ASGKST.

Belongs to the CoaE family.

It localises to the cytoplasm. The catalysed reaction is 3'-dephospho-CoA + ATP = ADP + CoA + H(+). Its pathway is cofactor biosynthesis; coenzyme A biosynthesis; CoA from (R)-pantothenate: step 5/5. Catalyzes the phosphorylation of the 3'-hydroxyl group of dephosphocoenzyme A to form coenzyme A. This chain is Dephospho-CoA kinase, found in Geobacter metallireducens (strain ATCC 53774 / DSM 7210 / GS-15).